Consider the following 333-residue polypeptide: Torsin-1A (333 aa).

An N-terminal signal peptide occupies residues 1–20 (MKLGRAALALLLLAPCVVRA). The segment at 92-252 (KPKKPLTLSL…VSVFNNKNSG (161 aa)) is interaction with SNAPIN. An ATP-binding site is contributed by 103 to 110 (GWTGTGKN). 2 N-linked (GlcNAc...) asparagine glycosylation sites follow: Asn-144 and Asn-159. An interaction with KLC1 region spans residues 252–333 (GFWHSSLIDR…FTKLDYYLDD (82 aa)). The tract at residues 313 to 333 (KVFSDKGCKTVFTKLDYYLDD) is interaction with SYNE3.

It belongs to the ClpA/ClpB family. Torsin subfamily. Homohexamer. Interacts with TOR1B; the interaction may be specific of neural tissues. Interacts (ATP-bound) with TOR1AIP1 and TOR1AIP2; the interactions induce ATPase activity. Interacts with KLHL14; preferentially when ATP-free. Interacts with KLC1 (via TPR repeats); the interaction associates TOR1A with the kinesin oligomeric complex. Interacts with COPS4; the interaction associates TOR1A with the CSN complex. Interacts with SNAPIN; the interaction is direct and associates SNAPIN with the CSN complex. Interacts with STON2. Interacts (ATP-bound) with SYNE3 (via KASH domain); the interaction is required for SYNE3 nuclear envelope localization. Interacts with VIM; the interaction associates TOR1A with the cytoskeleton. Interacts with PLEC. Interacts (ATP-bound) with SLC6A3; regulates SLC6A3 transport to the plasma membrane. N-glycosylated. As to expression, widely expressed (at protein level).

The protein localises to the endoplasmic reticulum lumen. Its subcellular location is the nucleus membrane. The protein resides in the cell projection. It localises to the growth cone. It is found in the cytoplasmic vesicle membrane. The protein localises to the synapse. Its subcellular location is the synaptosome. The protein resides in the cytoplasm. It localises to the cytoskeleton. It is found in the cytoplasmic vesicle. The protein localises to the secretory vesicle. Its subcellular location is the synaptic vesicle. The enzyme catalyses ATP + H2O = ADP + phosphate + H(+). Protein with chaperone functions important for the control of protein folding, processing, stability and localization as well as for the reduction of misfolded protein aggregates. Involved in the regulation of synaptic vesicle recycling, controls STON2 protein stability in collaboration with the COP9 signalosome complex (CSN). In the nucleus, may link the cytoskeleton with the nuclear envelope, this mechanism seems to be crucial for the control of nuclear polarity, cell movement and, specifically in neurons, nuclear envelope integrity. Participates in the cellular trafficking and may regulate the subcellular location of multipass membrane proteins such as the dopamine transporter SLC6A3, leading to the modulation of dopamine neurotransmission. In the endoplasmic reticulum, plays a role in the quality control of protein folding by increasing clearance of misfolded proteins such as SGCE variants or holding them in an intermediate state for proper refolding. May have a redundant function with TOR1B in non-neural tissues. The chain is Torsin-1A (Tor1a) from Mus musculus (Mouse).